Reading from the N-terminus, the 106-residue chain is Cell division protein FtsL (106 aa).

Residues 1–22 (MPRQSPPNLAKLIALDLLTVGR) are Cytoplasmic-facing. A helical transmembrane segment spans residues 23 to 43 (VPLLLLVLIFSCAMGVVFMTH). At 44–106 (HTRQAISAKD…SDKEVVINLK (63 aa)) the chain is on the periplasmic side.

This sequence belongs to the FtsL family. In terms of assembly, part of a complex composed of FtsB, FtsL and FtsQ.

The protein resides in the cell inner membrane. Functionally, essential cell division protein. May link together the upstream cell division proteins, which are predominantly cytoplasmic, with the downstream cell division proteins, which are predominantly periplasmic. The sequence is that of Cell division protein FtsL from Vibrio cholerae serotype O1 (strain ATCC 39315 / El Tor Inaba N16961).